Consider the following 509-residue polypeptide: Maturase K (509 aa).

This sequence belongs to the intron maturase 2 family. MatK subfamily.

Its subcellular location is the plastid. It is found in the chloroplast. Functionally, usually encoded in the trnK tRNA gene intron. Probably assists in splicing its own and other chloroplast group II introns. The chain is Maturase K from Thujopsis dolabrata (Hiba arborvitae).